A 393-amino-acid chain; its full sequence is Glycerol-3-phosphate dehydrogenase [NAD(+)] 1 (393 aa).

NAD(+)-binding positions include 45–50, Phe133, Lys157, and Ala190; that span reads GSGNWG. Position 157 (Lys157) interacts with substrate. The Proton acceptor role is filled by Lys250. NAD(+) is bound by residues Arg316 and Gln345. A substrate-binding site is contributed by 316–317; that stretch reads RN.

Belongs to the NAD-dependent glycerol-3-phosphate dehydrogenase family.

It catalyses the reaction sn-glycerol 3-phosphate + NAD(+) = dihydroxyacetone phosphate + NADH + H(+). The chain is Glycerol-3-phosphate dehydrogenase [NAD(+)] 1 (gpd1) from Cyberlindnera jadinii (Torula yeast).